We begin with the raw amino-acid sequence, 503 residues long: uncharacterized protein (503 aa).

The protein belongs to the Mg-chelatase subunits D/I family. ComM subfamily.

This is an uncharacterized protein from Mycobacterium bovis (strain ATCC BAA-935 / AF2122/97).